A 375-amino-acid polypeptide reads, in one-letter code: Alcohol dehydrogenase B (375 aa).

Positions 40, 62, 92, 95, 98, 106, and 169 each coordinate Zn(2+).

This sequence belongs to the zinc-containing alcohol dehydrogenase family. It depends on Zn(2+) as a cofactor.

It is found in the cytoplasm. It carries out the reaction a primary alcohol + NAD(+) = an aldehyde + NADH + H(+). The catalysed reaction is a secondary alcohol + NAD(+) = a ketone + NADH + H(+). The polypeptide is Alcohol dehydrogenase B (adhB) (Mycobacterium bovis (strain ATCC BAA-935 / AF2122/97)).